We begin with the raw amino-acid sequence, 1198 residues long: MFSNFFGSSKRNTIASSSSSSKKDKDNGKDESSKLKNSGSSTLPKPITNNESGNNFITSPSVSSPLISPLSSSPSPLLSSSSNSIQSTSHQQQQQHQGVITSLQMKPSCTSLTDDIEKKKQAKYDSSLEQTARKWVCDVLEIQLEDDKTFYELFKNGVLLCRLINKLRGGTIKRINESTISFKQLENIENYLKACKTLGLQSVNLFNSIDLHENKDISLVITNIVVLGKHASKIEGYNGIHLAGERKIIKITTTPVSPLFGGNHNNNNNNNNNNNTSNGDLSPVSITSASGGSSNYNSYSNNPLNKSSNGKKAKWRKSVKIPAVSSLNSDIRTKEAFKFSPELQKAAQDWIEEVTKEKFKLPSFSSSLKDGILLCRVINTIIPNTILYINNGNSSFKKMENIGNYLKGCLVVGLKKTDLFDTPDLFEEKNINFVISNIHVLGNHVNKMYSHLKLPLIKNIGNGGNGGNGGIGGGGGSDGSPLKMYSSIIHSKFGNGSSNTSSGNGGVIIPPEDMKDLKDWINHHLRAHHSLQIGSDMSNDLRNGVTLLTLLEELTLQKVGIFAREPVLPWHFMQNICLLLNFLRENSVHNVSDISPHDLFNGDIHSLCMITRLIRENFDTDHQMKSIPMDTRRQKVIEEIIATEQSYVKSLSTVYNLLIVPLLNSLDTNSPILSNDEISSIFGNWEHLLRSHINLLKEFKLKLNLPFNDLTIDDSNQNQNHNNIFGDSIFDSNITIGDVFLEKCEFLKDNYTNYINNYDNSYQRVKRLKKSNSNFEELVNTFEIFQDTHNGLDLYSYLIMPIQRIVRYILLLKEVIKYTPSTHPDYQMLQNAKENIKRVADHVNESKMAVENKRKILSIQDSIQNLQFNLMDKERTYIREGFLEIEDTFKKDSYFFLFSDLLLFVKYKPSEETGKEFKYKEVFYLDQVVDVSDILSDDEGEACVDGDDDGGEYEGGNGDATSGSADPEDQTLRRSCNSNNNNNSNSNKSNTVYSFEIETCEFSLVLLAESHTEKIEWMEDLRSCLQHQLIKEEDQLSSLSLSDNDDDNDADADVESSLNSISSPLLLLNNNNIINNNNNNNNNNNNNNNNNNNNNNCKNSNININSSIDNNSDNNNNDYDSKINSEENGDSSDEENKTSNRRSVSFKTHKRLESDETISDTESDDYELVCGRSKKSQPPPVPPRKITFSDTIKNIDNQ.

Residues 1–104 (MFSNFFGSSK…QHQGVITSLQ (104 aa)) are disordered. Low complexity predominate over residues 8–20 (SSKRNTIASSSSS). The span at 21-34 (SKKDKDNGKDESSK) shows a compositional bias: basic and acidic residues. Polar residues predominate over residues 35–58 (LKNSGSSTLPKPITNNESGNNFIT). The span at 59–97 (SPSVSSPLISPLSSSPSPLLSSSSNSIQSTSHQQQQQHQ) shows a compositional bias: low complexity. Positions 126–232 (SSLEQTARKW…NIVVLGKHAS (107 aa)) constitute a Calponin-homology (CH) 1 domain. The interval 260 to 284 (FGGNHNNNNNNNNNNNTSNGDLSPV) is disordered. Over residues 263–275 (NHNNNNNNNNNNN) the composition is skewed to low complexity. Calponin-homology (CH) domains follow at residues 341-449 (PELQ…NKMY) and 511-619 (PEDM…ENFD). In terms of domain architecture, DH spans 632–846 (RRQKVIEEII…KRVADHVNES (215 aa)). The PH domain occupies 876–1026 (TYIREGFLEI…WMEDLRSCLQ (151 aa)). Acidic residues predominate over residues 940-952 (GEACVDGDDDGGE). Disordered regions lie at residues 940–989 (GEAC…SNKS) and 1076–1198 (NNNN…IDNQ). 2 stretches are compositionally biased toward low complexity: residues 977–989 (NSNNNNNSNSNKS) and 1076–1118 (NNNN…NNND). The span at 1155 to 1167 (DETISDTESDDYE) shows a compositional bias: acidic residues. The span at 1188 to 1198 (FSDTIKNIDNQ) shows a compositional bias: polar residues.

In terms of assembly, binds to F-actin.

Its subcellular location is the late endosome. Involved in the regulation of the late steps of the endocytic pathway. The polypeptide is Rac guanine nucleotide exchange factor B (gxcB) (Dictyostelium discoideum (Social amoeba)).